The sequence spans 388 residues: Beta-lactamase (388 aa).

The N-terminal stretch at Met-1–Ala-24 is a signal peptide. Ser-89 serves as the catalytic Acyl-ester intermediate. Residue Tyr-175 is the Proton acceptor of the active site. Lys-342–Gly-344 is a substrate binding site.

This sequence belongs to the class-C beta-lactamase family.

The protein resides in the periplasm. It carries out the reaction a beta-lactam + H2O = a substituted beta-amino acid. Its function is as follows. This protein is a serine beta-lactamase with a substrate specificity for cephalosporins. The polypeptide is Beta-lactamase (ampC) (Yersinia enterocolitica).